A 305-amino-acid polypeptide reads, in one-letter code: Glycine--tRNA ligase alpha subunit (305 aa).

The protein belongs to the class-II aminoacyl-tRNA synthetase family. As to quaternary structure, tetramer of two alpha and two beta subunits.

The protein resides in the cytoplasm. The enzyme catalyses tRNA(Gly) + glycine + ATP = glycyl-tRNA(Gly) + AMP + diphosphate. The chain is Glycine--tRNA ligase alpha subunit from Streptococcus gordonii (strain Challis / ATCC 35105 / BCRC 15272 / CH1 / DL1 / V288).